A 425-amino-acid chain; its full sequence is MHDIEYIRQNSEEFEKAMESRGMKEFSAEEILKVDHKKRLLTTKLQDLNRQRNEITKKIKELKMSKSPCEKQIKSSKNITNEIEAISLKEQMEKDKLVNILSNLPNIPVQGVPIGAGENSNLEVRRYREKRQFDFVPKSHYELGERLGLMDFEQAAKISGSRFAILKGQLAKLGRALINFMLEMHVNEFGYTEVYHPVLVKNEAMYNVGQLPKFSDDSYLTTDELRLIPTGEVVLTNSVADKIVEEKKLPIRFTAYSECFRKEAGSAGQSTRGMIRQHQFGKVELVSITTEDQSNDELERMTGVAEEILKRLELPYRVILLCSGDMGFAAQKTYDIEVWLPEQNRYREISSCSNCGNFQARRMNAKYSLEANKKVKKYVHTLNGSALAIGRTIIAVMENYQNPDGSITIPNVLQKYISNGTVISK.

230 to 232 (TGE) provides a ligand contact to L-serine. 261–263 (RKE) is an ATP binding site. Position 284 (Glu284) interacts with L-serine. 348 to 351 (EISS) contributes to the ATP binding site. Ser385 contacts L-serine.

This sequence belongs to the class-II aminoacyl-tRNA synthetase family. Type-1 seryl-tRNA synthetase subfamily. Homodimer. The tRNA molecule binds across the dimer.

The protein resides in the cytoplasm. It carries out the reaction tRNA(Ser) + L-serine + ATP = L-seryl-tRNA(Ser) + AMP + diphosphate + H(+). The enzyme catalyses tRNA(Sec) + L-serine + ATP = L-seryl-tRNA(Sec) + AMP + diphosphate + H(+). It participates in aminoacyl-tRNA biosynthesis; selenocysteinyl-tRNA(Sec) biosynthesis; L-seryl-tRNA(Sec) from L-serine and tRNA(Sec): step 1/1. Its function is as follows. Catalyzes the attachment of serine to tRNA(Ser). Is also able to aminoacylate tRNA(Sec) with serine, to form the misacylated tRNA L-seryl-tRNA(Sec), which will be further converted into selenocysteinyl-tRNA(Sec). The polypeptide is Serine--tRNA ligase (Wolbachia sp. subsp. Brugia malayi (strain TRS)).